The sequence spans 281 residues: Apolipoprotein E (281 aa).

Positions 1-18 (MKVLWAALLIALLAGCQG) are cleaved as a signal peptide. Repeat copies occupy residues 82-103 (ALMDETMKELKAYKSELEEQLS), 104-125 (PVAEETRARLSKELQAAQARLG), 126-147 (ADMEDVRSRLAQYRSEVQAMLG), 148-169 (QSTDELRARLTSHLRKLRTVSY), and 198-219 (TRMEEVGSRTRDRLDEVKEQVE). Positions 82 to 219 (ALMDETMKEL…RLDEVKEQVE (138 aa)) are 5 X 22 AA approximate tandem repeats. At M145 the chain carries Methionine sulfoxide. S149 is subject to Phosphoserine. The segment at 160–170 (HLRKLRTVSYT) is LDL and other lipoprotein receptors binding. Heparin contacts are provided by residues 164-167 (LRTV) and 193-200 (GERLRTRM). The segment at 230 to 281 (QQMRLQAEAFQARLKSWFEPLVEDMQRQWAGLVEKVQAAVGASAAPVPSDNH) is homooligomerization. The tract at residues 242 to 254 (RLKSWFEPLVEDM) is specificity for association with VLDL.

The protein belongs to the apolipoprotein A1/A4/E family. In terms of assembly, homotetramer. May interact with ABCA1; functionally associated with ABCA1 in the biogenesis of HDLs. May interact with APP/A4 amyloid-beta peptide; the interaction is extremely stable in vitro but its physiological significance is unclear. May interact with MAPT. May interact with MAP2. In the cerebrospinal fluid, interacts with secreted SORL1. Interacts with PMEL; this allows the loading of PMEL luminal fragment on ILVs to induce fibril nucleation. Post-translationally, APOE exists as multiple glycosylated and sialylated glycoforms within cells and in plasma. The extent of glycosylation and sialylation are tissue and context specific. Glycated in plasma VLDL. In terms of processing, phosphorylated by FAM20C in the extracellular medium.

The protein resides in the secreted. It localises to the extracellular space. Its subcellular location is the extracellular matrix. It is found in the extracellular vesicle. The protein localises to the endosome. The protein resides in the multivesicular body. In terms of biological role, APOE is an apolipoprotein, a protein associating with lipid particles, that mainly functions in lipoprotein-mediated lipid transport between organs via the plasma and interstitial fluids. APOE is a core component of plasma lipoproteins and is involved in their production, conversion and clearance. Apolipoproteins are amphipathic molecules that interact both with lipids of the lipoprotein particle core and the aqueous environment of the plasma. As such, APOE associates with chylomicrons, chylomicron remnants, very low density lipoproteins (VLDL) and intermediate density lipoproteins (IDL) but shows a preferential binding to high-density lipoproteins (HDL). It also binds a wide range of cellular receptors including the LDL receptor/LDLR, the LDL receptor-related proteins LRP1, LRP2 and LRP8 and the very low-density lipoprotein receptor/VLDLR that mediate the cellular uptake of the APOE-containing lipoprotein particles. Finally, APOE also has a heparin-binding activity and binds heparan-sulfate proteoglycans on the surface of cells, a property that supports the capture and the receptor-mediated uptake of APOE-containing lipoproteins by cells. A main function of APOE is to mediate lipoprotein clearance through the uptake of chylomicrons, VLDLs, and HDLs by hepatocytes. APOE is also involved in the biosynthesis by the liver of VLDLs as well as their uptake by peripheral tissues ensuring the delivery of triglycerides and energy storage in muscle, heart and adipose tissues. By participating in the lipoprotein-mediated distribution of lipids among tissues, APOE plays a critical role in plasma and tissues lipid homeostasis. APOE is also involved in two steps of reverse cholesterol transport, the HDLs-mediated transport of cholesterol from peripheral tissues to the liver, and thereby plays an important role in cholesterol homeostasis. First, it is functionally associated with ABCA1 in the biogenesis of HDLs in tissues. Second, it is enriched in circulating HDLs and mediates their uptake by hepatocytes. APOE also plays an important role in lipid transport in the central nervous system, regulating neuron survival and sprouting. This chain is Apolipoprotein E (APOE), found in Aotus nancymaae (Ma's night monkey).